The sequence spans 186 residues: Large ribosomal subunit protein uL5 (186 aa).

This sequence belongs to the universal ribosomal protein uL5 family. Part of the 50S ribosomal subunit; part of the 5S rRNA/L5/L18/L25 subcomplex. Contacts the 5S rRNA and the P site tRNA. Forms a bridge to the 30S subunit in the 70S ribosome.

Its function is as follows. This is one of the proteins that bind and probably mediate the attachment of the 5S RNA into the large ribosomal subunit, where it forms part of the central protuberance. In the 70S ribosome it contacts protein S13 of the 30S subunit (bridge B1b), connecting the 2 subunits; this bridge is implicated in subunit movement. Contacts the P site tRNA; the 5S rRNA and some of its associated proteins might help stabilize positioning of ribosome-bound tRNAs. The polypeptide is Large ribosomal subunit protein uL5 (Cereibacter sphaeroides (strain ATCC 17029 / ATH 2.4.9) (Rhodobacter sphaeroides)).